Consider the following 253-residue polypeptide: MRILLSNDDGVTAPGIQVLAAALREFAEVQVVAPDRNRSGSSNALTLESPLRTLTMPNGDIAVQQGTPTDCVYLGVNALMQPAPDIVVSGINAGPNLGDDVIYSGTVAAAMEGRHLGLPALAVSLNGHQHYATAAAITCRVLRALQREPLRTGKILNINVPDLPLDQIKGIRVTRCGSRHPADKVFCQQDPRGQNLYWIGPPGDKFDAGPDTDFAAVEQGYVAITPLQVDLTAYAAQDVVKTWLTKAGVGGEW.

A divalent metal cation-binding residues include Asp-8, Asp-9, Ser-39, and Asn-92.

This sequence belongs to the SurE nucleotidase family. A divalent metal cation is required as a cofactor.

The protein localises to the cytoplasm. It catalyses the reaction a ribonucleoside 5'-phosphate + H2O = a ribonucleoside + phosphate. It carries out the reaction a ribonucleoside 3'-phosphate + H2O = a ribonucleoside + phosphate. The enzyme catalyses [phosphate](n) + H2O = [phosphate](n-1) + phosphate + H(+). Nucleotidase with a broad substrate specificity as it can dephosphorylate various ribo- and deoxyribonucleoside 5'-monophosphates and ribonucleoside 3'-monophosphates with highest affinity to 3'-AMP. Also hydrolyzes polyphosphate (exopolyphosphatase activity) with the preference for short-chain-length substrates (P20-25). Might be involved in the regulation of dNTP and NTP pools, and in the turnover of 3'-mononucleotides produced by numerous intracellular RNases (T1, T2, and F) during the degradation of various RNAs. In Serratia proteamaculans (strain 568), this protein is 5'/3'-nucleotidase SurE.